A 230-amino-acid polypeptide reads, in one-letter code: Sugar fermentation stimulation protein homolog (230 aa).

This sequence belongs to the SfsA family.

The polypeptide is Sugar fermentation stimulation protein homolog (Clostridium perfringens (strain 13 / Type A)).